A 163-amino-acid chain; its full sequence is Nucleotide-binding protein MS1759 (163 aa).

It belongs to the YajQ family.

Nucleotide-binding protein. The sequence is that of Nucleotide-binding protein MS1759 from Mannheimia succiniciproducens (strain KCTC 0769BP / MBEL55E).